The chain runs to 429 residues: MSRSSDLFHKAQTIIPGGVNSPVRAFKGVGGEPVFFKSGKGAYLTDVDDKQYIDYVGSWGPLILGHCHPKVIEAVDNVLHRGMSFGAPTELEIQLAEKIASLMPSIEKIRMVNSGTEATMTAIRLARGFTNKNKFIKFNGCYHGHSDSLLVKAGSGLLTLGIPSTPGIPQSITEHTLTADFNNLEQVAQLFEKYPNDIATVILEPIPGNMGFILPKIEFLKGLRELCDQYNALLIFDEVMTGFRVGLHGAQGLFGIKPDITTLGKIIGGGMPVGALGGKREIMSFLAPEGPVYQAGTLSGNPLAMAAGLATLKEIEKINFFEDLSNTTNKLTEALADAAENANIPFFAASLGGMFGFCFTDKNSVENYLDVASSDEVLFKKFFHAMLAQGVYFAPSMYEAGFVSSMHGDLEIQKTYDAAELVLNQLKSA.

Lys265 is modified (N6-(pyridoxal phosphate)lysine).

The protein belongs to the class-III pyridoxal-phosphate-dependent aminotransferase family. HemL subfamily. In terms of assembly, homodimer. Pyridoxal 5'-phosphate serves as cofactor.

The protein resides in the cytoplasm. It carries out the reaction (S)-4-amino-5-oxopentanoate = 5-aminolevulinate. It participates in porphyrin-containing compound metabolism; protoporphyrin-IX biosynthesis; 5-aminolevulinate from L-glutamyl-tRNA(Glu): step 2/2. This chain is Glutamate-1-semialdehyde 2,1-aminomutase, found in Legionella pneumophila subsp. pneumophila (strain Philadelphia 1 / ATCC 33152 / DSM 7513).